A 227-amino-acid chain; its full sequence is 7-cyano-7-deazaguanine synthase (227 aa).

Residue 9 to 19 (LSGGLDSATVL) coordinates ATP. 4 residues coordinate Zn(2+): C189, C199, C202, and C205.

This sequence belongs to the QueC family. Requires Zn(2+) as cofactor.

It carries out the reaction 7-carboxy-7-deazaguanine + NH4(+) + ATP = 7-cyano-7-deazaguanine + ADP + phosphate + H2O + H(+). It functions in the pathway purine metabolism; 7-cyano-7-deazaguanine biosynthesis. Its function is as follows. Catalyzes the ATP-dependent conversion of 7-carboxy-7-deazaguanine (CDG) to 7-cyano-7-deazaguanine (preQ(0)). This Cupriavidus taiwanensis (strain DSM 17343 / BCRC 17206 / CCUG 44338 / CIP 107171 / LMG 19424 / R1) (Ralstonia taiwanensis (strain LMG 19424)) protein is 7-cyano-7-deazaguanine synthase.